The following is a 30-amino-acid chain: Rothein 3.3 (30 aa).

L30 carries the leucine amide modification.

Expressed by the skin dorsal glands.

Its subcellular location is the secreted. In terms of biological role, lacks antimicrobial activity. Does not inhibit the formation of NO by neuronal nitric oxide. In Litoria rothii (Roth's tree frog), this protein is Rothein 3.3.